The sequence spans 200 residues: Probable fatty acid desaturase MIMI_L630 (200 aa).

The next 2 membrane-spanning stretches (helical) occupy residues 9–29 (FIQI…YHWI) and 79–99 (IGPL…FIMI).

It belongs to the fatty acid desaturase CarF family.

It localises to the membrane. The chain is Probable fatty acid desaturase MIMI_L630 from Acanthamoeba polyphaga mimivirus (APMV).